Here is a 102-residue protein sequence, read N- to C-terminus: Small ribosomal subunit protein uS10 (102 aa).

Belongs to the universal ribosomal protein uS10 family. As to quaternary structure, part of the 30S ribosomal subunit.

Involved in the binding of tRNA to the ribosomes. This chain is Small ribosomal subunit protein uS10, found in Halalkalibacterium halodurans (strain ATCC BAA-125 / DSM 18197 / FERM 7344 / JCM 9153 / C-125) (Bacillus halodurans).